A 472-amino-acid chain; its full sequence is Protein translocase subunit SecD (472 aa).

A run of 6 helical transmembrane segments spans residues 7-27, 298-318, 326-345, 349-368, 392-414, and 432-452; these read LLLL…KLPL, LVAG…YYRL, SLMI…GVTL, GIAG…VLIF, AFSS…FWFG, and SLFT…LSLP.

The protein belongs to the SecD/SecF family. SecD subfamily. As to quaternary structure, forms a complex with SecF. Part of the essential Sec protein translocation apparatus which comprises SecA, SecYEG and auxiliary proteins SecDF. Other proteins may also be involved.

Its subcellular location is the cell inner membrane. Part of the Sec protein translocase complex. Interacts with the SecYEG preprotein conducting channel. SecDF uses the proton motive force (PMF) to complete protein translocation after the ATP-dependent function of SecA. Its function is as follows. Probably participates in protein translocation into and across both the cytoplasmic and thylakoid membranes in cyanobacterial cells. The protein is Protein translocase subunit SecD of Synechocystis sp. (strain ATCC 27184 / PCC 6803 / Kazusa).